The following is a 141-amino-acid chain: Bombinins BLP-7/H-BO (141 aa).

Residues 1 to 18 form the signal peptide; it reads MNFKYIIAVSFLIASTYA. Residues 19 to 43 constitute a propeptide that is removed on maturation; the sequence is RSVKNDEQSLSQRDVLDEESLREIR. N70 is modified (asparagine amide). Residues 74–123 constitute a propeptide that is removed on maturation; it reads TAEEHEVMKRLEAVMRDLDSLDHPEEASEKETRGFNQEEIANLFTKKEKR. L140 carries the leucine amide modification.

The protein belongs to the bombinin family. As to expression, expressed by the skin glands.

The protein localises to the secreted. In terms of biological role, antimicrobial peptide with activity against Gram-positive and -negative bacteria and fungi. Shows activity against P.acnes (MIC=5 uM), E.coli (MIC=5-6.3 uM), S.aureus (MIC=5-6.3 uM), M.luteus, S.cerevisiae and C.albicans (MIC=10-12.5 uM). Also reduces the production of interleukin (IL)-8 and granulocyte-macrophage colony stimulating factor (CSF2) in normal human epidermal keratinocytes (NHEKs). Shows anticancer activity against three human hepatoma cell lines. In vivo, using the rat ear edema model, suppress P.acnes-induced skin inflammation, significantly reducing the ear thickness. Shows weak hemolytic activity against human erythrocytes. Shows weak antimicrobial activity (tested on E.coli, S.aureus and C.albicans). Shows high hemolytic activity against human erythrocytes (38% erythrocyte lysis at 80.0 uM, and up to 85% at 159.7 uM). In Bombina orientalis (Oriental fire-bellied toad), this protein is Bombinins BLP-7/H-BO.